The chain runs to 373 residues: Histidine protein methyltransferase 1 homolog (373 aa).

Basic and acidic residues predominate over residues 30 to 42 (SKESLVSERQKGT). Disordered regions lie at residues 30 to 52 (SKES…STEQ) and 64 to 94 (KSER…HEEK). Positions 70–88 (APSQDPDSSFGAANSSSNL) are enriched in polar residues. Phosphoserine is present on residues Ser72 and Ser77. His154 carries the post-translational modification Tele-methylhistidine. S-adenosyl-L-methionine contacts are provided by residues 168–172 (IWECT), Gly195, and 216–218 (QDY). The short motif at 247–253 (PDVKRLR) is the Nuclear localization signal element. S-adenosyl-L-methionine contacts are provided by residues 269–271 (GEW) and Ser294.

It belongs to the methyltransferase superfamily. METTL18 family. As to quaternary structure, interacts with GRWD1 and members of the heat shock protein 90 and 70 families; these proteins may possibly be methylation substrates for the enzyme. Post-translationally, monomethylated at His-154 through automethylation. Automethylation at His-154 positively regulates the methyltransferase activity toward RPL3. Probably methylated on other residues.

The protein resides in the cytoplasm. It localises to the cytosol. It is found in the nucleus. The protein localises to the nucleolus. The catalysed reaction is L-histidyl-[protein] + S-adenosyl-L-methionine = N(tele)-methyl-L-histidyl-[protein] + S-adenosyl-L-homocysteine + H(+). Protein-L-histidine N-tele-methyltransferase that specifically monomethylates RPL3, thereby regulating translation elongation. Histidine methylation of RPL3 regulates translation elongation by slowing ribosome traversal on tyrosine codons: slower elongation provides enough time for proper folding of synthesized proteins and prevents cellular aggregation of tyrosine-rich proteins. The sequence is that of Histidine protein methyltransferase 1 homolog (METTL18) from Bos taurus (Bovine).